A 408-amino-acid polypeptide reads, in one-letter code: Secreted effector protein SseJ (408 aa).

The Nucleophile role is filled by S151. Residues D381 and H384 contribute to the active site.

The protein belongs to the 'GDSL' lipolytic enzyme family. As to quaternary structure, interacts with RhoA and indirectly with SifA.

It is found in the secreted. The protein localises to the host cytoplasm. Effector proteins function to alter host cell physiology and promote bacterial survival in host tissues. This protein is required for endosomal tubulation and negatively regulates the formation of Salmonella-induced filaments (Sifs) in epithelial cells. Has both deacylase and esterification activities in vitro, but esterification is probably the dominant activity in host cells. Significantly contributes to cholesterol esterification, which reduces cellular cholesterol in cells and abrogates the ability of SifA to associate with cholesterol and LAMP-1 vesicles. In Salmonella typhimurium (strain LT2 / SGSC1412 / ATCC 700720), this protein is Secreted effector protein SseJ (sseJ).